Consider the following 374-residue polypeptide: 4-galactosyl-N-acetylglucosaminide 3-alpha-L-fucosyltransferase FUT5 (374 aa).

Over 1–15 (MDPLGPAKPQWLWRR) the chain is Cytoplasmic. Residues 16–34 (CLAGLLFQLLVAVCFFSYL) form a helical; Signal-anchor for type II membrane protein membrane-spanning segment. Topologically, residues 35-374 (RVSQDHATGS…TVRSIAAWFT (340 aa)) are lumenal. 4 N-linked (GlcNAc...) asparagine glycosylation sites follow: Asn60, Asn105, Asn167, and Asn198.

The protein belongs to the glycosyltransferase 10 family.

Its subcellular location is the golgi apparatus. It localises to the golgi stack membrane. The catalysed reaction is a beta-D-galactosyl-(1-&gt;3)-N-acetyl-beta-D-glucosaminyl derivative + GDP-beta-L-fucose = a beta-D-galactosyl-(1-&gt;3)-[alpha-L-fucosyl-(1-&gt;4)]-N-acetyl-beta-D-glucosaminyl derivative + GDP + H(+). It carries out the reaction an N-acetyl-alpha-neuraminyl-(2-&gt;3)-beta-D-galactosyl-(1-&gt;4)-N-acetyl-beta-D-glucosaminyl derivative + GDP-beta-L-fucose = an alpha-Neu5Ac-(2-&gt;3)-beta-D-Gal-(1-&gt;4)-[alpha-L-Fuc-(1-&gt;3)]-beta-D-GlcNAc derivative + GDP + H(+). The enzyme catalyses an alpha-Neu5Ac-(2-&gt;3)-beta-D-Gal-(1-&gt;4)-beta-D-GlcNAc-(1-&gt;3)-beta-D-Gal-(1-&gt;4)-[alpha-L-Fuc-(1-&gt;3)]-beta-D-GlcNAc derivative + GDP-beta-L-fucose = an alpha-Neu5Ac-(2-&gt;3)-beta-D-Gal-(1-&gt;4)-[alpha-L-Fuc-(1-&gt;3)]-beta-D-GlcNAc-(1-&gt;3)-beta-D-Gal-(1-&gt;4)-[alpha-L-Fuc-(1-&gt;3)]-beta-D-GlcNAc derivative + GDP + H(+). It catalyses the reaction a beta-D-galactosyl-(1-&gt;4)-N-acetyl-beta-D-glucosaminyl derivative + GDP-beta-L-fucose = a beta-D-galactosyl-(1-&gt;4)-[alpha-L-fucosyl-(1-&gt;3)]-N-acetyl-beta-D-glucosaminyl derivative + GDP + H(+). The catalysed reaction is a neolactoside nLc4Cer + GDP-beta-L-fucose = a neolactoside III(3)-alpha-Fuc-nLc4Cer + GDP + H(+). It carries out the reaction a neolactoside nLc6Cer + GDP-beta-L-fucose = beta-D-galactosyl-(1-&gt;4)-N-acetyl-beta-D-glucosaminyl-(1-&gt;3)-beta-D-galactosyl-(1-&gt;4)-[alpha-L-fucosyl-(1-&gt;3)]-N-acetyl-beta-D-glucosaminyl-(1-&gt;3)-beta-D-galactosyl-(1-&gt;4)-beta-D-glucosyl-(1&lt;-&gt;1')-ceramide + GDP + H(+). The enzyme catalyses a neolactoside nLc6Cer(d18:1(4E)) + GDP-beta-L-fucose = a neolactoside III(3)-alpha-Fuc-nLc6Cer(d18:1(4E)) + GDP + H(+). It catalyses the reaction a neolactoside nLc4Cer(d18:1(4E)) + GDP-beta-L-fucose = a neolactoside III(3)-alpha-Fuc-nLc4Cer(d18:1(4E)) + GDP + H(+). The catalysed reaction is a neolactoside VI(3)-alpha-NeuNAc-nLc6Cer + GDP-beta-L-fucose = a neolactoside VI(3)-alpha-NeuAc,III(3)-alphaFuc-nLc6Cer + GDP + H(+). It carries out the reaction beta-D-galactosyl-(1-&gt;4)-N-acetyl-D-glucosamine + GDP-beta-L-fucose = beta-D-galactosyl-(1-&gt;4)-[alpha-L-fucosyl-(1-&gt;3)]-N-acetyl-D-glucosamine + GDP + H(+). The enzyme catalyses N-acetyl-alpha-neuraminosyl-(2-&gt;3)-beta-D-galactosyl-(1-&gt;4)-N-acetyl-beta-D-glucosamine + GDP-beta-L-fucose = N-acetyl-alpha-neuraminosyl-(2-&gt;3)-beta-D-galactosyl-(1-&gt;4)-[alpha-L-fucosyl-(1-&gt;3)]-N-acetyl-beta-D-glucosamine + GDP + H(+). It catalyses the reaction alpha-L-Fuc-(1-&gt;2)-beta-D-Gal-(1-&gt;4)-D-GlcNAc + GDP-beta-L-fucose = alpha-L-Fuc-(1-&gt;2)-beta-D-Gal-(1-&gt;4)-[alpha-L-Fuc-(1-&gt;3)]-D-GlcNAc + GDP + H(+). The catalysed reaction is an alpha-Neu5Ac-(2-&gt;3)-beta-D-Gal-(1-&gt;3)-D-GlcNAc derivative + GDP-beta-L-fucose = an alpha-Neu5Ac-(2-&gt;3)-beta-D-Gal-(1-&gt;3)-[alpha-L-Fuc-(1-&gt;4)]-beta-D-GlcNAc derivative + GDP + H(+). It participates in protein modification; protein glycosylation. Catalyzes preferentially the transfer of L-fucose, from a guanosine diphosphate-beta-L-fucose, to the N-acetyl-beta-D-glucosamine (GlcNAc) of an N-acetyllactosamine unit (type 2 chain) of an oligosaccharide, or a glycoprotein- and a glycolipid-linked N-acetyllactosamine unit via an alpha (1,3) linkage and participates in the surface expression of VIM-2, Lewis X/SSEA-1 and sialyl Lewis X antigens. Preferentially transfers fucose to the GlcNAc of an internal N-acetyllactosamine unit of a poly-N-acetyllactosamine chain acceptor substrate. Also catalyzes to a lesser extend the transfer of L-fucose to the GlcNAc of a type 1 (beta-D-galactosyl-(1-&gt;3)-N-acetyl-beta-D-glucosaminyl) or H-type 1 (alpha-L-Fuc-(1-&gt;2)-beta-D-Gal-(1-&gt;3)-D-GlcNAc) chain oligosaccharide via an alpha (1,4) linkage. Preferentially catalyzes sialylated type 2 oligosaccharide acceptors over neutral type 2 or H type 2 (alpha-L-Fuc-(1-&gt;2)-beta-D-Gal-(1-&gt;4)-D-GlcNAc) oligosaccharide acceptors. Lactose-based structures are also acceptor substrates. The protein is 4-galactosyl-N-acetylglucosaminide 3-alpha-L-fucosyltransferase FUT5 of Gorilla gorilla gorilla (Western lowland gorilla).